The sequence spans 320 residues: Aspartate carbamoyltransferase catalytic subunit (320 aa).

Residues arginine 70 and threonine 71 each coordinate carbamoyl phosphate. Lysine 98 contacts L-aspartate. Residues arginine 120, histidine 150, and glutamine 153 each coordinate carbamoyl phosphate. L-aspartate contacts are provided by arginine 184 and arginine 239. Carbamoyl phosphate contacts are provided by glycine 280 and proline 281.

It belongs to the aspartate/ornithine carbamoyltransferase superfamily. ATCase family. In terms of assembly, heterododecamer (2C3:3R2) of six catalytic PyrB chains organized as two trimers (C3), and six regulatory PyrI chains organized as three dimers (R2).

The catalysed reaction is carbamoyl phosphate + L-aspartate = N-carbamoyl-L-aspartate + phosphate + H(+). It functions in the pathway pyrimidine metabolism; UMP biosynthesis via de novo pathway; (S)-dihydroorotate from bicarbonate: step 2/3. Its function is as follows. Catalyzes the condensation of carbamoyl phosphate and aspartate to form carbamoyl aspartate and inorganic phosphate, the committed step in the de novo pyrimidine nucleotide biosynthesis pathway. This Xylella fastidiosa (strain Temecula1 / ATCC 700964) protein is Aspartate carbamoyltransferase catalytic subunit.